Here is a 67-residue protein sequence, read N- to C-terminus: Protein SlyX homolog (67 aa).

Polar residues predominate over residues 48 to 60 (TSAPSTAAESNPQ). The segment at 48–67 (TSAPSTAAESNPQHEIPPHY) is disordered.

This sequence belongs to the SlyX family.

This is Protein SlyX homolog from Cupriavidus pinatubonensis (strain JMP 134 / LMG 1197) (Cupriavidus necator (strain JMP 134)).